A 177-amino-acid polypeptide reads, in one-letter code: Transcription factor E (177 aa).

The 83-residue stretch at 9–91 (VEELLNELVG…YWRINYDKAL (83 aa)) folds into the HTH TFE/IIEalpha-type domain.

The protein belongs to the TFE family. As to quaternary structure, monomer. Interaction with RNA polymerase subunits RpoF and RpoE is necessary for Tfe stimulatory transcription activity. Able to interact with Tbp and RNA polymerase in the absence of DNA promoter. Interacts both with the preinitiation and elongation complexes.

In terms of biological role, transcription factor that plays a role in the activation of archaeal genes transcribed by RNA polymerase. Facilitates transcription initiation by enhancing TATA-box recognition by TATA-box-binding protein (Tbp), and transcription factor B (Tfb) and RNA polymerase recruitment. Not absolutely required for transcription in vitro, but particularly important in cases where Tbp or Tfb function is not optimal. It dynamically alters the nucleic acid-binding properties of RNA polymerases by stabilizing the initiation complex and destabilizing elongation complexes. Seems to translocate with the RNA polymerase following initiation and acts by binding to the non template strand of the transcription bubble in elongation complexes. This chain is Transcription factor E, found in Archaeoglobus fulgidus (strain ATCC 49558 / DSM 4304 / JCM 9628 / NBRC 100126 / VC-16).